The following is a 598-amino-acid chain: Elongation factor 4 (598 aa).

Positions 5–187 (SHIRNFSIIA…RLVATIPAPT (183 aa)) constitute a tr-type G domain. GTP contacts are provided by residues 17 to 22 (DHGKST) and 134 to 137 (NKMD).

The protein belongs to the TRAFAC class translation factor GTPase superfamily. Classic translation factor GTPase family. LepA subfamily.

The protein resides in the cell inner membrane. It carries out the reaction GTP + H2O = GDP + phosphate + H(+). Its function is as follows. Required for accurate and efficient protein synthesis under certain stress conditions. May act as a fidelity factor of the translation reaction, by catalyzing a one-codon backward translocation of tRNAs on improperly translocated ribosomes. Back-translocation proceeds from a post-translocation (POST) complex to a pre-translocation (PRE) complex, thus giving elongation factor G a second chance to translocate the tRNAs correctly. Binds to ribosomes in a GTP-dependent manner. This Pseudomonas syringae pv. syringae (strain B728a) protein is Elongation factor 4.